Consider the following 400-residue polypeptide: Probable tRNA sulfurtransferase (400 aa).

Residues 60–164 (EPIIEKLKNV…KEATYITSGT (105 aa)) form the THUMP domain. Residues 182-183 (LL), 207-208 (HF), R264, G286, and Q295 each bind ATP.

Belongs to the ThiI family.

The protein resides in the cytoplasm. The enzyme catalyses [ThiI sulfur-carrier protein]-S-sulfanyl-L-cysteine + a uridine in tRNA + 2 reduced [2Fe-2S]-[ferredoxin] + ATP + H(+) = [ThiI sulfur-carrier protein]-L-cysteine + a 4-thiouridine in tRNA + 2 oxidized [2Fe-2S]-[ferredoxin] + AMP + diphosphate. It carries out the reaction [ThiS sulfur-carrier protein]-C-terminal Gly-Gly-AMP + S-sulfanyl-L-cysteinyl-[cysteine desulfurase] + AH2 = [ThiS sulfur-carrier protein]-C-terminal-Gly-aminoethanethioate + L-cysteinyl-[cysteine desulfurase] + A + AMP + 2 H(+). The protein operates within cofactor biosynthesis; thiamine diphosphate biosynthesis. Its function is as follows. Catalyzes the ATP-dependent transfer of a sulfur to tRNA to produce 4-thiouridine in position 8 of tRNAs, which functions as a near-UV photosensor. Also catalyzes the transfer of sulfur to the sulfur carrier protein ThiS, forming ThiS-thiocarboxylate. This is a step in the synthesis of thiazole, in the thiamine biosynthesis pathway. The sulfur is donated as persulfide by IscS. In Oceanobacillus iheyensis (strain DSM 14371 / CIP 107618 / JCM 11309 / KCTC 3954 / HTE831), this protein is Probable tRNA sulfurtransferase.